A 1553-amino-acid polypeptide reads, in one-letter code: Sodium channel protein PaFPC1 (1553 aa).

A disordered region spans residues 1 to 68 (MADNSPLIRE…SAHPDQALEQ (68 aa)). Residues 1 to 140 (MADNSPLIRE…RVAISTMVQP (140 aa)) lie on the Cytoplasmic side of the membrane. Basic and acidic residues predominate over residues 34–60 (ENGKTEENKDNSRDKGRGANKDRDGSA). A helical membrane pass occupies residues 141–159 (IFSYFIMITILIHCIFMIM). Residues 160 to 165 (PATQTT) lie on the Extracellular side of the membrane. Residues 166-186 (YILELVFLSIYTIEVVVKVLA) form a helical membrane-spanning segment. Topologically, residues 187 to 200 (RGFILHPFAYLRDP) are cytoplasmic. Residues 201–218 (WNWLDFLVTLIGYITLVV) form a helical membrane-spanning segment. Residues 219–224 (DLGHLY) are Extracellular-facing. The chain crosses the membrane as a helical span at residues 225–241 (ALRAFRVLRSWRTVTIV). Over 242-260 (PGWRTIVDALSLSITSLKD) the chain is Cytoplasmic. A helical transmembrane segment spans residues 261-280 (LVLLLLFSLFVFAVLGLQIY). Topologically, residues 281 to 360 (MGVLTQKCVK…PNYGYTSFDT (80 aa)) are extracellular. Disulfide bonds link Cys288-Cys337 and Cys328-Cys343. Asn300, Asn308, Asn312, and Asn330 each carry an N-linked (GlcNAc...) asparagine glycan. The segment at residues 361 to 385 (FGWAFLSVFRLVTLDYWEDLYQLAL) is an intramembrane region (pore-forming). A saxitoxin-binding site is contributed by Glu378. The Extracellular portion of the chain corresponds to 386–392 (RSAGPWH). The helical transmembrane segment at 393–413 (ILFFIIVVFYGTFCFLNFILA) threads the bilayer. The Cytoplasmic segment spans residues 414–519 (VVVMSYTHMV…GAIGAVVLSP (106 aa)). A helical membrane pass occupies residues 520–538 (FFELFIAVIIVLNITFMAL). The Extracellular portion of the chain corresponds to 539–549 (DHHDMNIEFER). The helical transmembrane segment at 550-569 (ILRTGNYIFTSIYIVEAVLK) threads the bilayer. At 570–583 (IIALSPKFYFKDSW) the chain is on the cytoplasmic side. The helical transmembrane segment at 584 to 603 (NVFDFIIVVFAILELGLEGV) threads the bilayer. Topologically, residues 604 to 605 (QG) are extracellular. The chain crosses the membrane as a helical span at residues 606–623 (LSVFRSFRLLRVFRLAKF). The Cytoplasmic segment spans residues 624 to 639 (WPTLNNFMSVMTKSYG). The helical transmembrane segment at 640–658 (AFVNVMYVMFLLLFIFAII) threads the bilayer. Over 659 to 686 (GMQLFGMNYIDNMERFPDGDLPRWNFTD) the chain is Extracellular. Residue Asn683 is glycosylated (N-linked (GlcNAc...) asparagine). An intramembrane region (pore-forming) is located at residues 687-707 (FLHSFMIVFRALCGEWIESMW). Tetrodotoxin is bound by residues Glu701 and Glu704. Glu704 contributes to the saxitoxin binding site. Topologically, residues 708 to 719 (DCMLVGDWSCIP) are extracellular. Cysteines 709 and 717 form a disulfide. Residues 720-740 (FFVAVFFVGNLVILNLLIALL) form a helical membrane-spanning segment. The Cytoplasmic portion of the chain corresponds to 741 to 857 (LNNYGSFCTS…VCFLLAKNKY (117 aa)). The helical transmembrane segment at 858 to 875 (FQKFVTAVLVITSVLLAL) threads the bilayer. The Extracellular segment spans residues 876–888 (EDIYLPQRPVLVN). The chain crosses the membrane as a helical span at residues 889-907 (ITLYVDYVLTAFFVIEMII). At 908–921 (MLFAVGFKKYFTSK) the chain is on the cytoplasmic side. A helical transmembrane segment spans residues 922 to 940 (WYWLDFIVVVAYLLNFVLM). The Extracellular portion of the chain corresponds to 941-945 (CAGIE). Residues 946–964 (ALQTLRLLRVFRLFRPLSK) traverse the membrane as a helical segment. The Cytoplasmic portion of the chain corresponds to 965–981 (VNGMQVVTSTLVEAVPH). The helical transmembrane segment at 982–1001 (IFNVILVGIFFWLVFAIMGV) threads the bilayer. The Extracellular portion of the chain corresponds to 1002–1047 (QLFAGKFYKCVDENSTVLSHEITMDRNDCLHENYTWENSPMNFDHV). A disulfide bridge links Cys1011 with Cys1030. N-linked (GlcNAc...) asparagine glycosylation occurs at Asn1015. N-linked (GlcNAc...) asparagine; atypical glycosylation occurs at Asn1028. Asn1034 carries N-linked (GlcNAc...) asparagine glycosylation. An intramembrane region (pore-forming) is located at residues 1048–1069 (GNAYLSLLQVATFKGWLQIMND). Gly1062 serves as a coordination point for tetrodotoxin. Trp1063 contacts saxitoxin. Residues 1070 to 1086 (AIDSREVHKQPIRETNI) lie on the Extracellular side of the membrane. Residues 1087 to 1108 (YMYLYFIFFIVFGSFFILKLFV) form a helical membrane-spanning segment. The Cytoplasmic segment spans residues 1109–1171 (CILIDIFRQQ…LMYDISVNRK (63 aa)). The tract at residues 1133 to 1146 (QLIYRRAVMRTMSA) is linker region that may regulate channel inactivation. A helical transmembrane segment spans residues 1172 to 1189 (FEYTMMILIILNVAVMAI). The Extracellular segment spans residues 1190-1200 (DHYGQSMEFSE). A helical membrane pass occupies residues 1201–1219 (VLDYLNLIFIIIFFVECVI). At 1220–1231 (KVSGLRHHYFKD) the chain is on the cytoplasmic side. Residues 1232-1249 (PWNIIDFLYVVLAIAGLM) form a helical membrane-spanning segment. Residues 1250–1262 (LSDVIEKYFISPT) lie on the Extracellular side of the membrane. The helical transmembrane segment at 1263-1279 (LLRILRILRVGRLLRYF) threads the bilayer. Over 1280-1298 (QSARGMRLLLLALRKALRT) the chain is Cytoplasmic. The chain crosses the membrane as a helical span at residues 1299–1316 (LFNVSFLLFVIMFVYAVF). The Extracellular portion of the chain corresponds to 1317-1338 (GMEFFMHIRDAGAIDDVYNFKT). The pore-forming intramembrane region spans 1339–1361 (FGQSIILLFQLATSAGWDGVYFA). Gly1354 and Asp1356 together coordinate tetrodotoxin. Asp1356 lines the saxitoxin pocket. Residues 1362-1387 (IANEEDCRAPDHELGYPGNCGSRALG) lie on the Extracellular side of the membrane. Cys1368 and Cys1381 form a disulfide bridge. A helical membrane pass occupies residues 1388 to 1410 (IAYLVSYLIITCLVVINMYAAVI). Over 1411–1553 (LDYVLEVYED…NAWRKHKQQN (143 aa)) the chain is Cytoplasmic.

Belongs to the sodium channel (TC 1.A.1.10) family. As to expression, detected in adult nerve cord, muscle, gut and mushroom-shaped accessory glands.

It localises to the cell membrane. With respect to regulation, inhibited by the pore blockers saxitoxin and tetrodotoxin. In terms of biological role, mediates the voltage-dependent sodium ion permeability of excitable membranes. This chain is Sodium channel protein PaFPC1, found in Periplaneta americana (American cockroach).